The primary structure comprises 204 residues: MRAHVAQHVSGELGAVGLQVEADQLVGEVQGVHGQQRAPRDAPVALAQRHRQQLQLELLELLGGQVLQRIQDGVARAPHGSRIPGRCRRSPRCSRRPGGSRLRGGTWTPRLPPTLVSRLPAPVRCPPAKGASLLHPWSPPTQASGLGPQAVGGRQDRALQLACEVGPGRGPQRGSWVAPACLWACTSGYRPETWAGSHWVYWST.

Residues 77-111 (APHGSRIPGRCRRSPRCSRRPGGSRLRGGTWTPRL) form a disordered region. A compositionally biased stretch (basic residues) spans 85-95 (GRCRRSPRCSR). Positions 96–105 (RPGGSRLRGG) are enriched in low complexity.

This is an uncharacterized protein from Homo sapiens (Human).